The primary structure comprises 1443 residues: Lysophospholipase NTE1 (1443 aa).

Residues 1 to 59 (MEEELAIEDLPRLTGTVSLNNGLLHSIYNETTVFKILRWSLVEIPKYILKLMSKNLEIN) lie on the Lumenal side of the membrane. The chain crosses the membrane as a helical span at residues 60 to 80 (LNVSSILIITLLIAAGILVIV). Residues 81–1443 (RYKFLTGYSE…RIKMYRRNTM (1363 aa)) are Cytoplasmic-facing. Residues 103–118 (ALGQQSTNYPKSTSSG) show a composition bias toward polar residues. Disordered regions lie at residues 103–122 (ALGQQSTNYPKSTSSGLFVE) and 199–251 (KYDE…GKMH). Over residues 210–235 (EGEEADEDDEEEEKEVGDDGDDEMDV) the composition is skewed to acidic residues. A nucleoside 3',5'-cyclic phosphate is bound by residues 619-750 (LYKR…LKSL) and 746-871 (KLKS…VASK). The 165-residue stretch at 1136–1300 (LVLGGGGSRG…LDNLPVMEMK (165 aa)) folds into the PNPLA domain. A GXGXXG motif is present at residues 1140–1145 (GGGSRG). The short motif at 1167 to 1171 (GTSIG) is the GXSXG element. The Nucleophile role is filled by Ser-1169. Asp-1287 (proton acceptor) is an active-site residue. The short motif at 1287-1289 (DGG) is the DGA/G element.

It belongs to the NTE family.

It is found in the endoplasmic reticulum membrane. The catalysed reaction is a 1-acyl-sn-glycero-3-phosphocholine + H2O = sn-glycerol 3-phosphocholine + a fatty acid + H(+). With respect to regulation, inhibited by organophosphorus esters. Its function is as follows. Intracellular phospholipase B that catalyzes the double deacylation of phosphatidylcholine (PC) to glycerophosphocholine (GroPCho). Plays an important role in membrane lipid homeostasis. Responsible for the rapid PC turnover in response to inositol, elevated temperatures, or when choline is present in the growth medium. This Lodderomyces elongisporus (strain ATCC 11503 / CBS 2605 / JCM 1781 / NBRC 1676 / NRRL YB-4239) (Yeast) protein is Lysophospholipase NTE1 (NTE1).